A 271-amino-acid chain; its full sequence is Magnesium dechelatase SGR2, chloroplastic (271 aa).

A chloroplast-targeting transit peptide spans 1–54; that stretch reads MCSLATNLLLPSKMKPVFPEKLSTSSLCVTTRRSKMKNRSIVPVARLFGPAIFE.

Belongs to the staygreen family. Interacts with the light harvesting complex II (LHCII). Interacts with the chlorophyll catabolic enzyme (CCE) RCCR.

It localises to the plastid. The protein resides in the chloroplast thylakoid membrane. It catalyses the reaction chlorophyll a + 2 H(+) = pheophytin a + Mg(2+). Its function is as follows. Magnesium chelatase involved in chlorophyll a degradation in the chlorophyll-protein complexes of photosystem I (PSI) and photosystem II (PSII). Contributes to the degradation of PSI and PSII in the thylakoid membranes. Required to trigger chlorophyll degradation during natural and dark-induced leaf senescence. Mediates chlorophyll degradation during embryo degreening. Recombinant SGR2 possesses high dechelating activity against chlorophyll a, very low activity against chlorophyllide a, and no activity against chlorophyll b. The chain is Magnesium dechelatase SGR2, chloroplastic from Arabidopsis thaliana (Mouse-ear cress).